The chain runs to 248 residues: Segregation and condensation protein A (248 aa).

This sequence belongs to the ScpA family. Component of a cohesin-like complex composed of ScpA, ScpB and the Smc homodimer, in which ScpA and ScpB bind to the head domain of Smc. The presence of the three proteins is required for the association of the complex with DNA.

The protein resides in the cytoplasm. Functionally, participates in chromosomal partition during cell division. May act via the formation of a condensin-like complex containing Smc and ScpB that pull DNA away from mid-cell into both cell halves. In Clostridium perfringens (strain ATCC 13124 / DSM 756 / JCM 1290 / NCIMB 6125 / NCTC 8237 / Type A), this protein is Segregation and condensation protein A.